Consider the following 142-residue polypeptide: Large ribosomal subunit protein uL11 (142 aa).

It belongs to the universal ribosomal protein uL11 family. In terms of assembly, part of the ribosomal stalk of the 50S ribosomal subunit. Interacts with L10 and the large rRNA to form the base of the stalk. L10 forms an elongated spine to which L12 dimers bind in a sequential fashion forming a multimeric L10(L12)X complex. In terms of processing, one or more lysine residues are methylated.

Functionally, forms part of the ribosomal stalk which helps the ribosome interact with GTP-bound translation factors. The protein is Large ribosomal subunit protein uL11 of Bradyrhizobium diazoefficiens (strain JCM 10833 / BCRC 13528 / IAM 13628 / NBRC 14792 / USDA 110).